The primary structure comprises 654 residues: Protein fem-1 homolog A-A (654 aa).

ANK repeat units lie at residues 2–31, 40–70, 82–111, 115–145, 149–178, 182–211, and 214–243; these read DLHT…REEL, GGGT…SVEA, EGAP…SVNR, TNST…DLEV, HGHT…QVNR, KGNT…RMER, and YGMT…GHEQ. Position 108 is a phosphoserine (Ser-108). The segment at 242–265 is disordered; it reads EQLSGTELPGEGSSQVAGNHCSTP. The span at 253 to 263 shows a compositional bias: polar residues; the sequence is GSSQVAGNHCS. 2 TPR repeats span residues 283-317 and 375-408; these read VEAL…RHQG and SYYI…QQNN. 2 ANK repeats span residues 519 to 561 and 565 to 594; these read NGFT…DPDS and DNNT…HMDA. Ser-608 is subject to Phosphoserine.

The protein belongs to the fem-1 family. Component of a CRL2 E3 ubiquitin-protein ligase complex, also named ECS (Elongin BC-CUL2/5-SOCS-box protein) complex, composed of CUL2, Elongin BC (ELOB and ELOC), RBX1 and substrate-specific adapter FEM1A. Interacts with PTGER4. Interacts with NFKB1; the interaction is direct. Phosphorylated; highly phosphorylated in myoblasts and myotubes. Phosphorylation at Ser-108 and Ser-608 promote PGE2-EP4-mediated inhibition of inflammation. Dephosphorylated by protein phosphatase 2A (PP2A). Preferentially expressed in cardiac muscle, brain and liver (at protein level). Also expressed in skeletal muscle.

Its subcellular location is the mitochondrion. It localises to the cytoplasm. It functions in the pathway protein modification; protein ubiquitination. Substrate-recognition component of a Cul2-RING (CRL2) E3 ubiquitin-protein ligase complex of the DesCEND (destruction via C-end degrons) pathway, which recognizes a C-degron located at the extreme C terminus of target proteins, leading to their ubiquitination and degradation. The C-degron recognized by the DesCEND pathway is usually a motif of less than ten residues and can be present in full-length proteins, truncated proteins or proteolytically cleaved forms. The CRL2(FEM1A) complex specifically recognizes proteins with an arginine at the C-terminus: recognizes and binds proteins ending with -Lys/Arg-Xaa-Arg and -Lys/Arg-Xaa-Xaa-Arg C-degrons, such as SIL1 or OR51B2, leading to their ubiquitination and degradation. Involved in PGE2-EP4-mediated inhibition of inflammation of macrophages via interaction with NFKB1 and PTGER4. Promotes inflammation in brain microglia through MAP2K4/MKK4-mediated signaling. The protein is Protein fem-1 homolog A-A of Mus musculus (Mouse).